The chain runs to 295 residues: Diaminopimelate epimerase (295 aa).

Residues N13 and N69 each coordinate substrate. C78 acts as the Proton donor in catalysis. Substrate contacts are provided by residues 79-80, N173, N212, and 230-231; these read GN and ER. The active-site Proton acceptor is the C239. Substrate is bound at residue 240 to 241; sequence GT.

This sequence belongs to the diaminopimelate epimerase family. As to quaternary structure, homodimer.

The protein localises to the cytoplasm. It catalyses the reaction (2S,6S)-2,6-diaminopimelate = meso-2,6-diaminopimelate. It functions in the pathway amino-acid biosynthesis; L-lysine biosynthesis via DAP pathway; DL-2,6-diaminopimelate from LL-2,6-diaminopimelate: step 1/1. Functionally, catalyzes the stereoinversion of LL-2,6-diaminopimelate (L,L-DAP) to meso-diaminopimelate (meso-DAP), a precursor of L-lysine. The chain is Diaminopimelate epimerase from Methanococcus aeolicus (strain ATCC BAA-1280 / DSM 17508 / OCM 812 / Nankai-3).